A 556-amino-acid polypeptide reads, in one-letter code: Glutamine--tRNA ligase (556 aa).

Residues 35–45 (PEPNGYLHIGH) carry the 'HIGH' region motif. ATP contacts are provided by residues 36-38 (EPN) and 42-48 (HIGHAKS). Asp-68 and Tyr-213 together coordinate L-glutamine. ATP is bound by residues Thr-232 and 262–263 (RL). Residues 269–273 (VTSKR) carry the 'KMSKS' region motif.

Belongs to the class-I aminoacyl-tRNA synthetase family. In terms of assembly, monomer.

It is found in the cytoplasm. It carries out the reaction tRNA(Gln) + L-glutamine + ATP = L-glutaminyl-tRNA(Gln) + AMP + diphosphate. This Pseudomonas aeruginosa (strain ATCC 15692 / DSM 22644 / CIP 104116 / JCM 14847 / LMG 12228 / 1C / PRS 101 / PAO1) protein is Glutamine--tRNA ligase.